Consider the following 184-residue polypeptide: Lactoylglutathione lyase (184 aa).

At alanine 2 the chain carries N-acetylalanine. Residues cysteine 19 and cysteine 20 are joined by a disulfide bond. The VOC domain occupies 31–177; the sequence is LLQQTMLRIK…DGYWIEILNP (147 aa). Residues glutamine 34 and arginine 38 each contribute to the substrate site. Glutamine 34 lines the Zn(2+) pocket. Zn(2+) is bound at residue glutamate 100. Asparagine 104 provides a ligand contact to substrate. Threonine 107 is subject to Phosphothreonine. Positions 123 and 127 each coordinate substrate. Residue histidine 127 coordinates Zn(2+). Cysteine 139 bears the S-glutathionyl cysteine mark. Lysine 148 carries the post-translational modification N6-acetyllysine; alternate. N6-succinyllysine; alternate is present on lysine 148. 157-158 provides a ligand contact to substrate; it reads KM. Residue glutamate 173 coordinates Zn(2+). Residue glutamate 173 is the Proton donor/acceptor of the active site.

Belongs to the glyoxalase I family. Homodimer. It depends on Zn(2+) as a cofactor. In terms of processing, glutathionylation at Cys-139 inhibits enzyme activity. Post-translationally, phosphorylated at Thr-107 in the presence of CaMK2. However, this is a consensus site for phosphorylation by CK2 so phosphorylation may be mediated by CK2 rather than CaMK2. Phosphorylation is induced by TNF and suppresses the TNF-induced transcriptional activity of NF-kappa-B. Exists in a nitric oxide (NO)-modified form. The exact nature of the modification is unknown, but it suppresses the TNF-induced transcriptional activity of NF-kappa-B.

It catalyses the reaction (R)-S-lactoylglutathione = methylglyoxal + glutathione. It functions in the pathway secondary metabolite metabolism; methylglyoxal degradation; (R)-lactate from methylglyoxal: step 1/2. Functionally, catalyzes the conversion of hemimercaptal, formed from methylglyoxal and glutathione, to S-lactoylglutathione. Involved in the regulation of TNF-induced transcriptional activity of NF-kappa-B. Required for normal osteoclastogenesis. The chain is Lactoylglutathione lyase (Glo1) from Rattus norvegicus (Rat).